The chain runs to 214 residues: RNA pyrophosphohydrolase (214 aa).

The 144-residue stretch at 6–149 (GFRPNVGIIL…KRDVYQLALT (144 aa)) folds into the Nudix hydrolase domain. The Nudix box motif lies at 38–59 (GGIKYGETPMQAMYRELHEETG).

Belongs to the Nudix hydrolase family. RppH subfamily. A divalent metal cation is required as a cofactor.

Functionally, accelerates the degradation of transcripts by removing pyrophosphate from the 5'-end of triphosphorylated RNA, leading to a more labile monophosphorylated state that can stimulate subsequent ribonuclease cleavage. The polypeptide is RNA pyrophosphohydrolase (Burkholderia orbicola (strain MC0-3)).